The chain runs to 298 residues: Protease HtpX homolog (298 aa).

2 helical membrane-spanning segments follow: residues 14–34 and 39–59; these read VVLLVVFFALLALIGASAGYL and YAMGLVLALVIGVIYATSMIF. A Zn(2+)-binding site is contributed by H143. Residue E144 is part of the active site. Position 147 (H147) interacts with Zn(2+). 2 helical membrane passes run 158-178 and 197-217; these read IAVALASAVTVISSIGGRMLW and IITLLLSLLSLLLAPLVASLI. E226 serves as a coordination point for Zn(2+).

Belongs to the peptidase M48B family. It depends on Zn(2+) as a cofactor.

It is found in the cell membrane. In Streptococcus pyogenes serotype M3 (strain SSI-1), this protein is Protease HtpX homolog.